The following is a 424-amino-acid chain: Serine--tRNA ligase (424 aa).

233 to 235 contributes to the L-serine binding site; that stretch reads TAE. ATP is bound at residue 264 to 266; it reads RKE. Glutamate 287 is an L-serine binding site. Residue 351–354 coordinates ATP; sequence EISS. Serine 386 contacts L-serine.

Belongs to the class-II aminoacyl-tRNA synthetase family. Type-1 seryl-tRNA synthetase subfamily. Homodimer. The tRNA molecule binds across the dimer.

The protein resides in the cytoplasm. It carries out the reaction tRNA(Ser) + L-serine + ATP = L-seryl-tRNA(Ser) + AMP + diphosphate + H(+). The enzyme catalyses tRNA(Sec) + L-serine + ATP = L-seryl-tRNA(Sec) + AMP + diphosphate + H(+). Its pathway is aminoacyl-tRNA biosynthesis; selenocysteinyl-tRNA(Sec) biosynthesis; L-seryl-tRNA(Sec) from L-serine and tRNA(Sec): step 1/1. Functionally, catalyzes the attachment of serine to tRNA(Ser). Is also able to aminoacylate tRNA(Sec) with serine, to form the misacylated tRNA L-seryl-tRNA(Sec), which will be further converted into selenocysteinyl-tRNA(Sec). This is Serine--tRNA ligase from Elusimicrobium minutum (strain Pei191).